The sequence spans 525 residues: Patatin-like protein 8 (525 aa).

A disordered region spans residues 1-50 (MNRRYEKPPPLSVSSKGKKKHFVNHTAPNTPGNYERTQTSPTLSTARSHE). The segment covering 26–46 (TAPNTPGNYERTQTSPTLSTA) has biased composition (polar residues). Residues 124–338 (LSIDGGGMRG…AMSNPTAAAI (215 aa)) enclose the PNPLA domain. The short motif at 128-133 (GGGMRG) is the GXGXXG element. Ser-168 acts as the Nucleophile in catalysis.

This sequence belongs to the patatin family. Specifically expressed in roots.

Its function is as follows. Possesses non-specific lipolytic acyl hydrolase (LAH) activity. Hydrolyzes phospholipids as well as galactolipids. May play a role in disease resistance. This Arabidopsis thaliana (Mouse-ear cress) protein is Patatin-like protein 8 (PLP8).